The chain runs to 573 residues: Adenine deaminase 2 (573 aa).

It belongs to the metallo-dependent hydrolases superfamily. Adenine deaminase family. Mn(2+) is required as a cofactor.

It catalyses the reaction adenine + H2O + H(+) = hypoxanthine + NH4(+). The protein is Adenine deaminase 2 of Shouchella clausii (strain KSM-K16) (Alkalihalobacillus clausii).